Reading from the N-terminus, the 293-residue chain is MSPNSEATGTAWAPPPPRPSRGVIMISSVSTNDVRRFLLCMRVYSTVAVQGTCTFLLCLGLVLAFPHLKGTVFLCCTGFMPPLSLMVPTICLALLHGKRDEGSFTSPPSPGLLTIYSVLTTLSVIVASACSSSTLVTFSGLLACVLFSLCSCVTGLAGHNHRRWQVIVTLFVIGVIAFLIALYLQPVPLGHKLFLGYYAMALSFMLVVTVFDTTRLFEIAWSEADLLTLCLYENLVYLYLLILILFTTEDSLDKLIAWMTWLSSRATGATNAASISGCDLLREVQRNLTRTMA.

7 helical membrane passes run 55–75 (FLLCLGLVLAFPHLKGTVFLC), 77–97 (TGFMPPLSLMVPTICLALLHG), 110–130 (PGLLTIYSVLTTLSVIVASAC), 138–158 (FSGLLACVLFSLCSCVTGLAG), 164–184 (WQVIVTLFVIGVIAFLIALYL), 193–213 (LFLGYYAMALSFMLVVTVFDT), and 226–246 (LLTLCLYENLVYLYLLILILF). Asn287 carries N-linked (GlcNAc...) asparagine; by host glycosylation.

This sequence belongs to the cytomegalovirus US12 family.

Its subcellular location is the membrane. This is an uncharacterized protein from Human cytomegalovirus (strain AD169) (HHV-5).